Consider the following 596-residue polypeptide: Cytochrome P450 monooxygenase FUM15 (596 aa).

Residues 476 to 512 (DRWLSPKNGNREATEQSKFKIGNQKRDSTAAPEVTQE) form a disordered region. The span at 484 to 503 (GNREATEQSKFKIGNQKRDS) shows a compositional bias: basic and acidic residues. Residue Cys536 participates in heme binding.

It belongs to the cytochrome P450 family. Heme is required as a cofactor.

It is found in the endoplasmic reticulum. It participates in secondary metabolite biosynthesis. In terms of biological role, cytochrome P450 monooxygenase; part of the gene cluster that mediates the biosynthesis of fumonisins B1 (FB1), B2 (FB2), B3 (FB3), and B4 (FB4), which are carcinogenic mycotoxins. Within the pathway, FUM15 may be responsible for the hydroxylations at positions C-14 and/or C-15. Also plays a role in self-protection from FB1 toxicity, probably through derivatization of FB1, and may contribute to ceramide biosynthesis. The biosynthesis starts with the FUM1-catalyzed carbon chain assembly from one molecule of acetyl-CoA, eight molecules of malonyl-CoA, and two molecules of methionine (in S-adenosyl form). The C18 polyketide chain is released from the enzyme by a nucleophilic attack of a carbanion, which is derived from R-carbon of alanine by decarboxylation, on the carbonyl carbon of polyketide acyl chain. This step is catalyzed by the pyridoxal 5'-phosphate-dependent aminoacyl transferase FUM8. The resultant 3-keto intermediate is then stereospecifically reduced to a 3-hydroxyl product by reductase FUM13. Subsequent oxidations at C-10 by the cytochrome P450 monooxygenase FUM2, C-14 and C-15 by FUM6, FUM12 or FUM15, tricarballylic esterification of the hydroxyl groups on C-14 and C-15 by acyltransferase FUM14, and C-5 hydroxylation by 2-keto-glutarate-dependent dioxygenase FUM3 furnish the biosynthesis of fumonisins. The tricarballylic moieties are most likely derived from the citric acid cycle, and their addition to the carbon backbone may involve FUM7, FUM10, FUM11 and FUM14. This chain is Cytochrome P450 monooxygenase FUM15, found in Gibberella moniliformis (strain M3125 / FGSC 7600) (Maize ear and stalk rot fungus).